Consider the following 37-residue polypeptide: Dolichyl-diphosphooligosaccharide--protein glycosyltransferase subunit 4B (37 aa).

At 1 to 8 (MFDDQDLG) the chain is on the lumenal side. A helical membrane pass occupies residues 9 to 29 (FFANFLGIFIFVLVMAYHFVM). The Cytoplasmic segment spans residues 30–37 (ADVKYEGN).

It belongs to the OST4 family. Component of the oligosaccharyltransferase (OST) complex.

The protein localises to the endoplasmic reticulum membrane. Functionally, subunit of the oligosaccharyl transferase (OST) complex that catalyzes the initial transfer of a defined glycan (Glc(3)Man(9)GlcNAc(2) in eukaryotes) from the lipid carrier dolichol-pyrophosphate to an asparagine residue within an Asn-X-Ser/Thr consensus motif in nascent polypeptide chains, the first step in protein N-glycosylation. N-glycosylation occurs cotranslationally and the complex associates with the Sec61 complex at the channel-forming translocon complex that mediates protein translocation across the endoplasmic reticulum (ER). All subunits are required for a maximal enzyme activity. The chain is Dolichyl-diphosphooligosaccharide--protein glycosyltransferase subunit 4B (OST4B) from Oryza sativa subsp. japonica (Rice).